We begin with the raw amino-acid sequence, 429 residues long: Adenylosuccinate synthetase (429 aa).

Residues 12-18 (GDEGKGK) and 40-42 (GHT) contribute to the GTP site. Catalysis depends on Asp13, which acts as the Proton acceptor. Residues Asp13 and Gly40 each contribute to the Mg(2+) site. Residues 13-16 (DEGK), 38-41 (NAGH), Thr128, Arg142, Gln223, Thr238, and Arg302 each bind IMP. The active-site Proton donor is the His41. 298 to 304 (TTTGRPR) provides a ligand contact to substrate. GTP-binding positions include Arg304, 330–332 (SID), and 412–414 (SVG).

The protein belongs to the adenylosuccinate synthetase family. In terms of assembly, homodimer. Mg(2+) serves as cofactor.

It localises to the cytoplasm. The enzyme catalyses IMP + L-aspartate + GTP = N(6)-(1,2-dicarboxyethyl)-AMP + GDP + phosphate + 2 H(+). It functions in the pathway purine metabolism; AMP biosynthesis via de novo pathway; AMP from IMP: step 1/2. Plays an important role in the de novo pathway of purine nucleotide biosynthesis. Catalyzes the first committed step in the biosynthesis of AMP from IMP. The chain is Adenylosuccinate synthetase from Bacillus thuringiensis (strain Al Hakam).